The chain runs to 182 residues: NADH-quinone oxidoreductase subunit B 1 (182 aa).

[4Fe-4S] cluster is bound by residues C47, C48, C113, and C142.

The protein belongs to the complex I 20 kDa subunit family. In terms of assembly, NDH-1 is composed of 14 different subunits. Subunits NuoB, C, D, E, F, and G constitute the peripheral sector of the complex. [4Fe-4S] cluster is required as a cofactor.

It is found in the cell inner membrane. It catalyses the reaction a quinone + NADH + 5 H(+)(in) = a quinol + NAD(+) + 4 H(+)(out). NDH-1 shuttles electrons from NADH, via FMN and iron-sulfur (Fe-S) centers, to quinones in the respiratory chain. Couples the redox reaction to proton translocation (for every two electrons transferred, four hydrogen ions are translocated across the cytoplasmic membrane), and thus conserves the redox energy in a proton gradient. The chain is NADH-quinone oxidoreductase subunit B 1 from Anaeromyxobacter dehalogenans (strain 2CP-C).